A 507-amino-acid polypeptide reads, in one-letter code: Maturase K (507 aa).

It belongs to the intron maturase 2 family. MatK subfamily.

The protein localises to the plastid. The protein resides in the chloroplast. In terms of biological role, usually encoded in the trnK tRNA gene intron. Probably assists in splicing its own and other chloroplast group II introns. This Ranunculus repens (Creeping buttercup) protein is Maturase K.